Reading from the N-terminus, the 95-residue chain is Translation initiation factor IF-1 (95 aa).

Residues 1–72 (MAKEELIEMD…TKARITYRHK (72 aa)) enclose the S1-like domain. The disordered stretch occupies residues 70–95 (RHKVGGPPGPVTGGGNRPPPRQPRRR). Over residues 86–95 (RPPPRQPRRR) the composition is skewed to pro residues.

It belongs to the IF-1 family. In terms of assembly, component of the 30S ribosomal translation pre-initiation complex which assembles on the 30S ribosome in the order IF-2 and IF-3, IF-1 and N-formylmethionyl-tRNA(fMet); mRNA recruitment can occur at any time during PIC assembly.

Its subcellular location is the cytoplasm. Functionally, one of the essential components for the initiation of protein synthesis. Stabilizes the binding of IF-2 and IF-3 on the 30S subunit to which N-formylmethionyl-tRNA(fMet) subsequently binds. Helps modulate mRNA selection, yielding the 30S pre-initiation complex (PIC). Upon addition of the 50S ribosomal subunit IF-1, IF-2 and IF-3 are released leaving the mature 70S translation initiation complex. This Rhodospirillum rubrum (strain ATCC 11170 / ATH 1.1.1 / DSM 467 / LMG 4362 / NCIMB 8255 / S1) protein is Translation initiation factor IF-1.